A 305-amino-acid chain; its full sequence is Ankyrin repeat domain-containing protein 23 (305 aa).

Positions 41 to 72 (QEAVAREKLKLEEEKKKKLERFNSTRFNLDNL) form a coiled coil. Residues 83 to 92 (KKRLRHRVPP) show a composition bias toward basic residues. Positions 83–104 (KKRLRHRVPPRKPEPLVKPQSQ) are disordered. ANK repeat units follow at residues 143-172 (LHRT…TVDA), 176-205 (LDRT…RVNA), 209-238 (IGST…HLNA), and 242-271 (EGDT…ELGV). The segment at 178–195 (RTPVFWACRGGHLVILKQ) is interaction with TTN.

Interacts with titin/TTN and MYPN. As to expression, mainly expressed in heart, skeletal muscle and brown adipose tissues.

It localises to the nucleus. Functionally, may be involved in the energy metabolism. Could be a molecular link between myofibrillar stretch-induced signaling pathways and muscle gene expression. This chain is Ankyrin repeat domain-containing protein 23 (ANKRD23), found in Homo sapiens (Human).